Here is a 164-residue protein sequence, read N- to C-terminus: Endoribonuclease YbeY (164 aa).

Residues histidine 132, histidine 136, and histidine 142 each contribute to the Zn(2+) site.

This sequence belongs to the endoribonuclease YbeY family. The cofactor is Zn(2+).

Its subcellular location is the cytoplasm. Its function is as follows. Single strand-specific metallo-endoribonuclease involved in late-stage 70S ribosome quality control and in maturation of the 3' terminus of the 16S rRNA. The sequence is that of Endoribonuclease YbeY from Clostridium kluyveri (strain NBRC 12016).